The primary structure comprises 65 residues: Diapause-specific peptide (65 aa).

An N-terminal signal peptide occupies residues 1 to 24 (MGAALKMTIFLLIVACAMIATTEA). Cystine bridges form between cysteine 31–cysteine 45, cysteine 35–cysteine 57, and cysteine 46–cysteine 64.

In terms of tissue distribution, highly expressed in the fat body.

It localises to the secreted. Its function is as follows. Has antifungal activity against T.rubrum. Blocks voltage-dependent N-type calcium channels (Cav2.2 / CACNA1B). The protein is Diapause-specific peptide of Gastrophysa atrocyanea (Leaf beetle).